We begin with the raw amino-acid sequence, 540 residues long: Dynein axonemal assembly factor 3 homolog (540 aa).

The tract at residues 480-499 is disordered; the sequence is AVTEAMPESTFKYDTDTDYG.

Belongs to the DNAAF3 family. As to expression, expressed in mechanosensory chordotonal (Ch) neurons, spermatocytes and spermatids (at protein level).

Its subcellular location is the cytoplasm. It localises to the dynein axonemal particle. Its function is as follows. Required for the assembly of axonemal inner and outer dynein arms. Involved in the cytoplasmic preassembly of dyneins into complexes before their transport into cilia. Essential for the development of axonemal dynein motors in the sensory cilium of mechanosensory chordotonal (Ch) neurons and sperm flagellum, and consequently, is required for the mechanotransduction process of hearing and sperm mobility. This is Dynein axonemal assembly factor 3 homolog from Drosophila melanogaster (Fruit fly).